We begin with the raw amino-acid sequence, 283 residues long: Putative sugar uptake protein BA_0200/GBAA_0200/BAS0200 (283 aa).

A run of 10 helical transmembrane segments spans residues 4-21, 26-48, 52-71, 84-106, 110-132, 151-173, 178-195, 208-230, 234-253, and 260-279; these read LLAL…LVSV, GAYS…MYVF, ALTM…WALG, VSTT…GVIA, WTTT…GVVF, LLTL…WYNI, AILP…VLTS, ALSG…RVGV, FPLS…VFLG, and QLIF…VLLG.

This sequence belongs to the GRP transporter (TC 2.A.7.5) family.

Its subcellular location is the cell membrane. The protein is Putative sugar uptake protein BA_0200/GBAA_0200/BAS0200 of Bacillus anthracis.